We begin with the raw amino-acid sequence, 66 residues long: RICDDSSIPFLRTPQLCPKGQDVCYKKTPIVKKFKWLQKKGCASSCPKDGFIKIFKIECCTKDNCI.

4 disulfide bridges follow: C3–C24, C17–C42, C46–C59, and C60–C65.

Expressed by the venom gland.

The protein localises to the secreted. In terms of biological role, no toxicity is observed upon intravenous or intracerebroventricular injection into mice. Has no cytotoxic activity towards C2C12 cells at 100 ug/ml. The sequence is that of Clarkitoxin-I-Mdum from Micrurus dumerilii (Coral snake).